The primary structure comprises 431 residues: Keratin, type I cytoskeletal 18 (431 aa).

A head region spans residues 2–83; sequence SLRTSYSVRS…SGSTGEIMGN (82 aa). Ser12 is subject to Phosphoserine. Thr13 carries the post-translational modification Phosphothreonine. 2 positions are modified to phosphoserine: Ser22 and Ser36. Residues 84–119 form a coil 1A region; that stretch reads EKMAMQNLNDRLASYLEKVRILEQANSKLELKIREA. An IF rod domain is found at 84-395; sequence EKMAMQNLND…RLLDGGDFKL (312 aa). Residues 120-136 are linker 1; sequence LEKRGPDVHDYSRFQPI. Residues 137 to 228 are coil 1B; that stretch reads VDELRKKIFD…KNHDNEVMEL (92 aa). The tract at residues 229-252 is linker 12; it reads RNQISQSGVQVDVDAPKGQDLSQI. The tract at residues 253–390 is coil 2; sequence MEEIRAKYEK…IATYRRLLDG (138 aa). The tail stretch occupies residues 391–431; sequence GDFKLQDALEEQKKVKVMTVTQTLVDGKVVSSSTETKERKL.

This sequence belongs to the intermediate filament family. In terms of assembly, heterotetramer of two type I and two type II keratins. Keratin-18 associates with keratin-8. Proteolytically cleaved by caspases during epithelial cell apoptosis. Expressed in simple epithelia such as intestinal mucosa, bile duct, hepatocytes, renal tubules, endothelia, ocular lens epithelium, and in a variety of mesenchymally-derived cells such as blood vessel endothelia, pillar gill cells, optic nerve glial cells, fibroblasts, interstitial cells, chondrocytes and ovarian theca cells. Also expressed in epidermis, pharyngeal mucosa, mucosa of anterior esophagus, gill mucosa and cornea.

In terms of biological role, when phosphorylated, plays a role in filament reorganization. This chain is Keratin, type I cytoskeletal 18, found in Danio rerio (Zebrafish).